A 351-amino-acid chain; its full sequence is Nuclear inhibitor of protein phosphatase 1 (351 aa).

The interaction with CDC5L, SF3B1 and MELK stretch occupies residues 1–142; sequence MAAAANSGSS…LPSAVKGDEK (142 aa). An FHA domain is found at 49 to 101; it reads YLFGRNPDLCDFTIDHQSCSRVHAALVYHKHLKRVFLIDLNSTHGTFLGHIRL. Residues 143–224 are interaction with EED; it reads MGGEDDELKG…VDPSVGRFRN (82 aa). A Phosphothreonine; by CK2; in vitro modification is found at Thr161. Ser178 is subject to Phosphoserine; by PKA; in vitro. 2 short sequence motifs (nuclear localization signal) span residues 185–209 and 210–240; these read GNLDIQRPKRKRKNSRVTFSEDDEI and INPEDVDPSVGRFRNMVQTAVVPVKKKRVEG. An involved in PP-1 inhibition region spans residues 191 to 200; that stretch reads RPKRKRKNSR. Ser199 is subject to Phosphoserine. Residues 200-203 are involved in PP-1 binding; sequence RVTF. Ser204 is modified (phosphoserine). Ser249 is subject to Phosphoserine. Residue Tyr264 is modified to Phosphotyrosine. The tract at residues 310–329 is interaction with EED; that stretch reads AVNMNPAPNPAVYNPEAVNE. The interval 316-351 is disordered; the sequence is APNPAVYNPEAVNEPKKKKYAKEAWPGKKPTPSLLI. Positions 330–351 are RNA-binding; that stretch reads PKKKKYAKEAWPGKKPTPSLLI. The tract at residues 331–337 is involved in PP-1 inhibition; that stretch reads KKKKYAK. Tyr335 bears the Phosphotyrosine mark.

Interacts with phosphorylated CDC5L, SF3B1 and MELK. Interacts with EED. Part of a complex consisting of PPP1R8, EED, HDAC2 and PP-1. Part of the spliceosome. Interacts with PPP1CA, PPP1CB and PPP1CC. The N-terminus is blocked. Post-translationally, inactivated by phosphorylation on Ser-199 or Ser-204.

It localises to the nucleus. The protein resides in the nucleus speckle. In terms of biological role, inhibitor subunit of the major nuclear protein phosphatase-1 (PP-1). It has RNA-binding activity but does not cleave RNA and may target PP-1 to RNA-associated substrates. May also be involved in pre-mRNA splicing. Binds DNA and might act as a transcriptional repressor. Seems to be required for cell proliferation. The sequence is that of Nuclear inhibitor of protein phosphatase 1 (PPP1R8) from Bos taurus (Bovine).